The sequence spans 128 residues: Mediator of RNA polymerase II transcription subunit 31-A (128 aa).

This sequence belongs to the Mediator complex subunit 31 family. As to quaternary structure, component of the Mediator complex.

It localises to the nucleus. In terms of biological role, component of the Mediator complex, a coactivator involved in the regulated transcription of nearly all RNA polymerase II-dependent genes. Mediator functions as a bridge to convey information from gene-specific regulatory proteins to the basal RNA polymerase II transcription machinery. Mediator is recruited to promoters by direct interactions with regulatory proteins and serves as a scaffold for the assembly of a functional preinitiation complex with RNA polymerase II and the general transcription factors. The sequence is that of Mediator of RNA polymerase II transcription subunit 31-A (med31-a) from Xenopus laevis (African clawed frog).